We begin with the raw amino-acid sequence, 511 residues long: ATP synthase subunit alpha 1 (511 aa).

ATP is bound at residue 174 to 181 (GDRQTGKT).

This sequence belongs to the ATPase alpha/beta chains family. As to quaternary structure, F-type ATPases have 2 components, CF(1) - the catalytic core - and CF(0) - the membrane proton channel. CF(1) has five subunits: alpha(3), beta(3), gamma(1), delta(1), epsilon(1). CF(0) has four main subunits: a(1), b(1), b'(1) and c(9-12).

The protein resides in the cell inner membrane. The enzyme catalyses ATP + H2O + 4 H(+)(in) = ADP + phosphate + 5 H(+)(out). Produces ATP from ADP in the presence of a proton gradient across the membrane. The alpha chain is a regulatory subunit. In Chlorobium luteolum (strain DSM 273 / BCRC 81028 / 2530) (Pelodictyon luteolum), this protein is ATP synthase subunit alpha 1.